The following is a 303-amino-acid chain: MSTVISLPKINGEYRKNFKLSQLTWFKVGGISQVFYKPKDEEDLSCFLKNLQFDIQITVLGAGSNLLIRDNGIDGVTIKLGRSFNEINFVKNNHYNIISVGAGTLNYDVAKFCLQHNLGGLEFLVGIPGTIGGGIAMNAGAYGQEFKDVVYSVEALDRLGNKHIFLSKDLNFEYRQCIVNGFLIFTKTNLICYNDSKTSISQKLQKIQTVRKLTQPINQKTAGSAFRNTNNYKAWQLIDKVGLRGHSIGGAQVSNLHCNFLINNGNATASDIENLGELIRKNVFDHTGITLEWEIKIVGKKSL.

Positions Lys-27 to Ile-207 constitute an FAD-binding PCMH-type domain. The active site involves Arg-175. The active-site Proton donor is Ser-224. Glu-294 is an active-site residue.

It belongs to the MurB family. FAD serves as cofactor.

Its subcellular location is the cytoplasm. The enzyme catalyses UDP-N-acetyl-alpha-D-muramate + NADP(+) = UDP-N-acetyl-3-O-(1-carboxyvinyl)-alpha-D-glucosamine + NADPH + H(+). Its pathway is cell wall biogenesis; peptidoglycan biosynthesis. Functionally, cell wall formation. The sequence is that of UDP-N-acetylenolpyruvoylglucosamine reductase from Orientia tsutsugamushi (strain Boryong) (Rickettsia tsutsugamushi).